The primary structure comprises 249 residues: General transcription factor IIF subunit 2 (249 aa).

N-acetylalanine is present on Ala-2. 3 positions are modified to N6-acetyllysine: Lys-22, Lys-33, and Lys-137. Phosphoserine is present on Ser-142. DNA is bound by residues Gly-227 and His-229. Ser-248 carries the phosphoserine modification.

Belongs to the TFIIF beta subunit family. Heterodimer of an alpha and a beta subunit. Interacts with HTATSF1 and GPBP1. Interacts with URI1. Interacts with GTF2B (via N-terminus); this interaction is inhibited in presence of GTF2F1. Part of TBP-based Pol II pre-initiation complex (PIC), in which Pol II core assembles with general transcription factors and other specific initiation factors including GTF2E1, GTF2E2, GTF2F1, GTF2F2, TCEA1, ERCC2, ERCC3, GTF2H2, GTF2H3, GTF2H4, GTF2H5, GTF2A1, GTF2A2, GTF2B and TBP; this large multi-subunit PIC complex mediates DNA unwinding and targets Pol II core to the transcription start site where the first phosphodiester bond forms.

The protein localises to the nucleus. TFIIF is a general transcription initiation factor that binds to RNA polymerase II and helps to recruit it to the initiation complex in collaboration with TFIIB. The protein is General transcription factor IIF subunit 2 (GTF2F2) of Bos taurus (Bovine).